An 82-amino-acid chain; its full sequence is MDKHYIYIVKCKDGSLYTGYAKDIEKRIIKHNNGQGAKYTKIRRPVQLVYQEMFDTKSEALKREYEIKTFSRQKKLKLISEG.

The GIY-YIG domain maps to 2–77; the sequence is DKHYIYIVKC…KTFSRQKKLK (76 aa).

It belongs to the UPF0213 family.

The protein is UPF0213 protein SSP2268 of Staphylococcus saprophyticus subsp. saprophyticus (strain ATCC 15305 / DSM 20229 / NCIMB 8711 / NCTC 7292 / S-41).